A 505-amino-acid chain; its full sequence is MSVQVAAPGGLGLGLERPSPEELVRQTRQVVKGLEALRAEHRGLAGHLAEALAAQGPAAGLELLEEKQQVVSHSLEAIELGLGEAQVLLALSAHVGALEAEKQRLRAQARRLAQENAWLREELEETQRRLRASEEAVAQLEEEKSHLEFLGQLRQYDPPAESQQPESPPRRDSLASLFPSEEEERRGPEAVGAAAAQQGGYEIPARLRTLHNLVIQYAGQGRYEVAVPLCRQALEDLERSSGHCHPDVATMLNILALVYRDQNKYKEATDLLHDALQIREQTLGPEHPAVAATLNNLAVLYGKRGRYREAEPLCQRALEIREKVLGADHPDVAKQLNNLALLCQNQGKFEEVERHYARALSIYEALGGPHDPNVAKTKNNLASAYLKQNKYQQAEELYKEILHREALPAPLGAPNTGTTSDTQQQTLSRSSSFSKLRESIRRGSEKLVSRLRGEGAAGAAGMKRAMSLSMLNTDGSRAPENQFPRQHLSEASRTLSTSTQDLGPR.

The tract at residues 1–20 is disordered; it reads MSVQVAAPGGLGLGLERPSP. The stretch at 88–150 forms a coiled coil; the sequence is LLALSAHVGA…EEEKSHLEFL (63 aa). Residues 157-193 form a disordered region; the sequence is DPPAESQQPESPPRRDSLASLFPSEEEERRGPEAVGA. S173 bears the Phosphoserine mark. TPR repeat units lie at residues 207-240, 249-282, 291-324, 333-366, and 375-408; these read LRTL…LERS, ATML…REQT, AATL…REKV, AKQL…YEAL, and AKTK…EALP. The disordered stretch occupies residues 409-505; sequence APLGAPNTGT…STSTQDLGPR (97 aa). Residues 416 to 434 show a composition bias toward low complexity; that stretch reads TGTTSDTQQQTLSRSSSFS. Residues 435–453 show a composition bias toward basic and acidic residues; the sequence is KLRESIRRGSEKLVSRLRG. Residue S467 is modified to Phosphoserine. A compositionally biased stretch (polar residues) spans 489 to 505; it reads SEASRTLSTSTQDLGPR. Position 499 is a phosphothreonine (T499).

Belongs to the kinesin light chain family. As to quaternary structure, oligomer composed of two heavy chains and two light chains. Associates with microtubulin in an ATP-dependent manner. Interacts with KIF5C. Interacts with ODF1. Interacts with LRGUK. Interacts with VDAC2.

The protein resides in the cytoplasm. It is found in the cytoskeleton. The protein localises to the mitochondrion. Kinesin is a microtubule-associated force-producing protein that may play a role in organelle transport. Plays a role during spermiogenesis in the development of the sperm tail midpiece and in the normal function of spermatozoa. May play a role in the formation of the mitochondrial sheath formation in the developing spermatid midpiece. The polypeptide is Kinesin light chain 3 (KLC3) (Bos taurus (Bovine)).